We begin with the raw amino-acid sequence, 347 residues long: Phenylalanine--tRNA ligase alpha subunit (347 aa).

Mg(2+) is bound at residue Glu-261.

It belongs to the class-II aminoacyl-tRNA synthetase family. Phe-tRNA synthetase alpha subunit type 1 subfamily. Tetramer of two alpha and two beta subunits. Requires Mg(2+) as cofactor.

It localises to the cytoplasm. It catalyses the reaction tRNA(Phe) + L-phenylalanine + ATP = L-phenylalanyl-tRNA(Phe) + AMP + diphosphate + H(+). The protein is Phenylalanine--tRNA ligase alpha subunit of Streptococcus uberis (strain ATCC BAA-854 / 0140J).